The primary structure comprises 384 residues: S-adenosylmethionine synthase (384 aa).

His15 is an ATP binding site. Asp17 provides a ligand contact to Mg(2+). Glu43 is a K(+) binding site. L-methionine contacts are provided by Glu56 and Gln99. Residues Gln99–Arg109 are flexible loop. ATP contacts are provided by residues Asp164–Lys166, Arg230–Phe231, Asp239, Arg245–Lys246, Ala262, and Lys266. Asp239 contacts L-methionine. Position 270 (Lys270) interacts with L-methionine.

This sequence belongs to the AdoMet synthase family. As to quaternary structure, homotetramer; dimer of dimers. It depends on Mg(2+) as a cofactor. Requires K(+) as cofactor.

The protein resides in the cytoplasm. The catalysed reaction is L-methionine + ATP + H2O = S-adenosyl-L-methionine + phosphate + diphosphate. It functions in the pathway amino-acid biosynthesis; S-adenosyl-L-methionine biosynthesis; S-adenosyl-L-methionine from L-methionine: step 1/1. In terms of biological role, catalyzes the formation of S-adenosylmethionine (AdoMet) from methionine and ATP. The overall synthetic reaction is composed of two sequential steps, AdoMet formation and the subsequent tripolyphosphate hydrolysis which occurs prior to release of AdoMet from the enzyme. This chain is S-adenosylmethionine synthase, found in Yersinia enterocolitica serotype O:8 / biotype 1B (strain NCTC 13174 / 8081).